The chain runs to 132 residues: uncharacterized protein (132 aa).

Residues 1 to 34 (MTAGAGGSPPTRRCPATEDRAPATVATPSSADPT) form a disordered region.

This sequence to M.tuberculosis Rv2656c.

This is an uncharacterized protein from Mycobacterium tuberculosis (strain CDC 1551 / Oshkosh).